The following is a 210-amino-acid chain: Small ribosomal subunit protein uS4 (210 aa).

The region spanning 100-160 (GRLDNVVYRM…EKSKNQLRVK (61 aa)) is the S4 RNA-binding domain.

Belongs to the universal ribosomal protein uS4 family. In terms of assembly, part of the 30S ribosomal subunit. Contacts protein S5. The interaction surface between S4 and S5 is involved in control of translational fidelity.

In terms of biological role, one of the primary rRNA binding proteins, it binds directly to 16S rRNA where it nucleates assembly of the body of the 30S subunit. Its function is as follows. With S5 and S12 plays an important role in translational accuracy. This Alcanivorax borkumensis (strain ATCC 700651 / DSM 11573 / NCIMB 13689 / SK2) protein is Small ribosomal subunit protein uS4.